The following is a 240-amino-acid chain: Methylthioribulose-1-phosphate dehydratase (240 aa).

Residue Cys99 coordinates substrate. His116 and His118 together coordinate Zn(2+). Catalysis depends on Glu145, which acts as the Proton donor/acceptor. His201 serves as a coordination point for Zn(2+).

Belongs to the aldolase class II family. MtnB subfamily. Zn(2+) is required as a cofactor.

Its subcellular location is the cytoplasm. The catalysed reaction is 5-(methylsulfanyl)-D-ribulose 1-phosphate = 5-methylsulfanyl-2,3-dioxopentyl phosphate + H2O. The protein operates within amino-acid biosynthesis; L-methionine biosynthesis via salvage pathway; L-methionine from S-methyl-5-thio-alpha-D-ribose 1-phosphate: step 2/6. In terms of biological role, catalyzes the dehydration of methylthioribulose-1-phosphate (MTRu-1-P) into 2,3-diketo-5-methylthiopentyl-1-phosphate (DK-MTP-1-P). The chain is Methylthioribulose-1-phosphate dehydratase from Paracoccidioides brasiliensis (strain Pb03).